A 171-amino-acid polypeptide reads, in one-letter code: Cytochrome c-type biogenesis protein CcmE (171 aa).

Over 1 to 7 (MNRKQKR) the chain is Cytoplasmic. A helical; Signal-anchor for type II membrane protein membrane pass occupies residues 8 to 28 (LAVIAGGMGFIAAAVLLVMFA). Residues 29 to 171 (FSQSVAYFYM…NPGEEAKATQ (143 aa)) lie on the Periplasmic side of the membrane. The heme site is built by histidine 124 and tyrosine 128. The tract at residues 132 to 171 (DVADRLKQQGLWKEGQGGQESPGKEGQGQENPGEEAKATQ) is disordered.

Belongs to the CcmE/CycJ family.

The protein resides in the cell inner membrane. Functionally, heme chaperone required for the biogenesis of c-type cytochromes. Transiently binds heme delivered by CcmC and transfers the heme to apo-cytochromes in a process facilitated by CcmF and CcmH. In Rhizobium leguminosarum bv. trifolii (strain WSM2304), this protein is Cytochrome c-type biogenesis protein CcmE.